The following is a 367-amino-acid chain: Cytochrome P450 119 (367 aa).

The heme site is built by H76, R80, T257, R259, H315, and C317.

This sequence belongs to the cytochrome P450 family. Requires heme as cofactor.

The protein localises to the cytoplasm. The polypeptide is Cytochrome P450 119 (cyp119) (Sulfurisphaera tokodaii (strain DSM 16993 / JCM 10545 / NBRC 100140 / 7) (Sulfolobus tokodaii)).